Here is a 161-residue protein sequence, read N- to C-terminus: Regulator of ribonuclease activity A (161 aa).

It belongs to the RraA family. Homotrimer. Binds to both RNA-binding sites in the C-terminal region of Rne and to RhlB.

It localises to the cytoplasm. In terms of biological role, globally modulates RNA abundance by binding to RNase E (Rne) and regulating its endonucleolytic activity. Can modulate Rne action in a substrate-dependent manner by altering the composition of the degradosome. Modulates RNA-binding and helicase activities of the degradosome. The protein is Regulator of ribonuclease activity A of Photobacterium profundum (strain SS9).